The following is a 301-amino-acid chain: D-alanine--D-alanine ligase (301 aa).

The region spanning 99–293 (KRILAFGNVR…FEELLDTIIE (195 aa)) is the ATP-grasp domain. 126–181 (IENLGYPVFIKPNNGGSSVATTLVESKEAVKDAVLEALKYDTEVMIEEYIKGDEIT) contributes to the ATP binding site. Mg(2+) is bound by residues aspartate 248, glutamate 260, and asparagine 262.

The protein belongs to the D-alanine--D-alanine ligase family. Mg(2+) serves as cofactor. It depends on Mn(2+) as a cofactor.

The protein localises to the cytoplasm. It catalyses the reaction 2 D-alanine + ATP = D-alanyl-D-alanine + ADP + phosphate + H(+). It functions in the pathway cell wall biogenesis; peptidoglycan biosynthesis. Its function is as follows. Cell wall formation. The protein is D-alanine--D-alanine ligase of Clostridium perfringens (strain SM101 / Type A).